We begin with the raw amino-acid sequence, 304 residues long: Glycine--tRNA ligase alpha subunit (304 aa).

This sequence belongs to the class-II aminoacyl-tRNA synthetase family. Tetramer of two alpha and two beta subunits.

Its subcellular location is the cytoplasm. It carries out the reaction tRNA(Gly) + glycine + ATP = glycyl-tRNA(Gly) + AMP + diphosphate. This Actinobacillus pleuropneumoniae serotype 3 (strain JL03) protein is Glycine--tRNA ligase alpha subunit.